The sequence spans 64 residues: MSKECYFTGRKTVSSNNRSHAMNQTKRVVKPNLQKVTILENGELKTVWASAKALKKLPAGVERV.

The disordered stretch occupies residues 1–23 (MSKECYFTGRKTVSSNNRSHAMN). Positions 11-23 (KTVSSNNRSHAMN) are enriched in polar residues.

Belongs to the bacterial ribosomal protein bL28 family.

This is Large ribosomal subunit protein bL28 from Lactococcus lactis subsp. cremoris (strain SK11).